The following is a 120-amino-acid chain: Ribosome-binding factor A (120 aa).

The protein belongs to the RbfA family. In terms of assembly, monomer. Binds 30S ribosomal subunits, but not 50S ribosomal subunits or 70S ribosomes.

Its subcellular location is the cytoplasm. One of several proteins that assist in the late maturation steps of the functional core of the 30S ribosomal subunit. Associates with free 30S ribosomal subunits (but not with 30S subunits that are part of 70S ribosomes or polysomes). Required for efficient processing of 16S rRNA. May interact with the 5'-terminal helix region of 16S rRNA. The sequence is that of Ribosome-binding factor A from Clostridium botulinum (strain 657 / Type Ba4).